The chain runs to 125 residues: Large ribosomal subunit protein bL20 (125 aa).

Belongs to the bacterial ribosomal protein bL20 family.

Functionally, binds directly to 23S ribosomal RNA and is necessary for the in vitro assembly process of the 50S ribosomal subunit. It is not involved in the protein synthesizing functions of that subunit. The protein is Large ribosomal subunit protein bL20 of Rhodospirillum rubrum (strain ATCC 11170 / ATH 1.1.1 / DSM 467 / LMG 4362 / NCIMB 8255 / S1).